Reading from the N-terminus, the 467-residue chain is Asparagine--tRNA ligase (467 aa).

It belongs to the class-II aminoacyl-tRNA synthetase family. Homodimer.

It is found in the cytoplasm. The enzyme catalyses tRNA(Asn) + L-asparagine + ATP = L-asparaginyl-tRNA(Asn) + AMP + diphosphate + H(+). This chain is Asparagine--tRNA ligase, found in Glaesserella parasuis serovar 5 (strain SH0165) (Haemophilus parasuis).